Consider the following 335-residue polypeptide: Capsular polysaccharide phosphotransferase WcwK (335 aa).

It belongs to the stealth family.

The polypeptide is Capsular polysaccharide phosphotransferase WcwK (wcwK) (Streptococcus pneumoniae).